Consider the following 372-residue polypeptide: MGTRNRKLLFFLHYQRYLGLTNLDFSKSLHIYWLHGTWSSTAIQIVVVGVFMAALLGALAESLYYMETKSQTGNTFDNAVILTTSVTQLLANLWLRSQQKSQVNLLQRLSQVVELLQFEPYAVPQFRWLYRIWLLVCLIYGAMVTHFGINWLTTMQISRVLTLIGFVYRCVLANFQFTCYTGMVVILKKLLQVQVKQLEHLVSTTTISMAGVAGCLRTHDEILLLGQRELIAVYGGVILFLFIYQVMQCILIFYISNLEGFHSSNDLVLIFCWLAPMLFYLILPLVVNDIHNQANKTAKMLTKVPRTGTGLDRMIEKFLLKNLRQKPILTAYGFFALDKSTLFKLFTAIFTYMVILVQFKEMENSTKSINKF.

Over Met-1–Tyr-32 the chain is Cytoplasmic. The helical transmembrane segment at Trp-33–Ala-53 threads the bilayer. Over Ala-54–Leu-59 the chain is Extracellular. Residues Ala-60–Val-80 form a helical membrane-spanning segment. Residues Ile-81–Ala-122 lie on the Cytoplasmic side of the membrane. Residues Val-123–Met-143 traverse the membrane as a helical segment. The Extracellular segment spans residues Val-144–Phe-147. A helical transmembrane segment spans residues Gly-148–Tyr-168. Over Arg-169 to Leu-224 the chain is Cytoplasmic. A helical membrane pass occupies residues Leu-225–Gln-245. Residues Val-246–Asn-265 lie on the Extracellular side of the membrane. A helical membrane pass occupies residues Asp-266–Val-286. At Val-287 to Ala-348 the chain is on the cytoplasmic side. The helical transmembrane segment at Ile-349–Ser-368 threads the bilayer. Position 369 (Ile-369) is a topological domain, extracellular.

It belongs to the insect chemoreceptor superfamily. Gustatory receptor (GR) family. Gr21a subfamily. As to expression, expressed in the adult labellar chemosensory neurons. In larvae, is expressed in neurons of the terminal external chemosensory organ, as well as in the dorsal and posterior pharyngeal sense organs.

The protein localises to the cell membrane. Gustatory receptor which mediates acceptance or avoidance behavior, depending on its substrates. Plays a role in sustaining courtship behavior in males, possibly through the reception of a stimulating arrestant pheromone. In Drosophila melanogaster (Fruit fly), this protein is Gustatory and pheromone receptor 39a, isoform B (Gr39a).